The chain runs to 54 residues: Zinc-containing ferredoxin A (54 aa).

Positions 1–21 (GIDPNYRTSRPEVGTHEGHKV) are disordered. The interval 1–36 (GIDPNYRTSRPEVGTHEGHKVYGPVENPKVLGIHGA) is N-terminal extension. Basic and acidic residues predominate over residues 9–20 (SRPEVGTHEGHK). Zn(2+) contacts are provided by H16 and H19. Residue K29 is modified to N6-methyllysine. Residue H34 participates in Zn(2+) binding. One can recognise a 4Fe-4S ferredoxin-type 1 domain in the interval 35–54 (GAIVGVDFDLCIADGSCINA). Residues C45 and C51 each contribute to the [3Fe-4S] cluster site.

It depends on [3Fe-4S] cluster as a cofactor. The cofactor is [4Fe-4S] cluster. Zn(2+) is required as a cofactor.

Its function is as follows. Ferredoxins are iron-sulfur proteins that transfer electrons in a wide variety of metabolic reactions. This is Zinc-containing ferredoxin A (zfx) from Sulfuracidifex metallicus (Sulfolobus metallicus).